The primary structure comprises 208 residues: Ras-related protein Rab-6A (208 aa).

N-acetylserine is present on Ser-2. Residues Ser-23, Val-24, Gly-25, Lys-26, Thr-27, Ser-28, Asp-39, Asn-40, Tyr-42, and Thr-45 each coordinate GTP. Residue Thr-27 coordinates Mg(2+). The short motif at 32-50 (RFMYDSFDNTYQATIGIDF) is the Switch 1 element. Mg(2+) is bound by residues Thr-45 and Asp-68. The short motif at 69-88 (TAGQERFRSLIPSYIRDSTV) is the Switch 2 element. 7 residues coordinate GTP: Gly-71, Asn-126, Lys-127, Asp-129, Ser-156, Ala-157, and Lys-158. Ser-184 is modified (phosphoserine). 2 S-geranylgeranyl cysteine lipidation sites follow: Cys-206 and Cys-208. Position 208 is a cysteine methyl ester (Cys-208).

It belongs to the small GTPase superfamily. Rab family. In terms of assembly, interacts with BICDL1; leads to its accumulation in the pericentrosomal region. Interacts with SCYL1BP1. Interacts with VSP52. Interacts with RABGAP1. Interacts with GCC2 (via its GRIP domain). Interacts with RAB6IP1 (via its RUN 1 domain). Interacts with TMF1. Interacts with CIMAP3. Interacts (GTP-bound) with APBA1/MINT1 isoform 3, also called Mint1_826, but not with isoform 1. Interacts with RIC1; the interaction is direct with a preference for RAB6A-GDP. Interacts with RGP1; the interaction is direct with a preference for RAB6A-GDP. As to quaternary structure, interacts (GTP-bound) with DYNLRB1; the interaction is direct. Interacts with BICD1. Interacts with BICD2; the interaction is direct. Interacts (GTP-bound) with VPS13B. Interacts with BICD1. Interacts (GDP-bound) with DYNLRB1; the interaction is direct. Interacts (GTP-bound) with VPS13B. It depends on Mg(2+) as a cofactor. In terms of processing, prenylated.

Its subcellular location is the golgi apparatus membrane. It is found in the cytoplasmic vesicle. The protein resides in the secretory vesicle. It localises to the acrosome membrane. It carries out the reaction GTP + H2O = GDP + phosphate + H(+). With respect to regulation, regulated by guanine nucleotide exchange factors (GEFs) which promote the exchange of bound GDP for free GTP. Regulated by GTPase activating proteins (GAPs) which increase the GTP hydrolysis activity. Inhibited by GDP dissociation inhibitors (GDIs). Its function is as follows. The small GTPases Rab are key regulators of intracellular membrane trafficking, from the formation of transport vesicles to their fusion with membranes. Rabs cycle between an inactive GDP-bound form and an active GTP-bound form that is able to recruit to membranes different sets of downstream effectors directly responsible for vesicle formation, movement, tethering and fusion. RAB6A acts as a regulator of COPI-independent retrograde transport from the Golgi apparatus towards the endoplasmic reticulum (ER). Has a low GTPase activity. Recruits VPS13B to the Golgi membrane. Plays a role in neuron projection development. In Mus musculus (Mouse), this protein is Ras-related protein Rab-6A.